Reading from the N-terminus, the 1374-residue chain is DNA-directed RNA polymerase subunit beta (1374 aa).

Belongs to the RNA polymerase beta chain family. In terms of assembly, the RNAP catalytic core consists of 2 alpha, 1 beta, 1 beta' and 1 omega subunit. When a sigma factor is associated with the core the holoenzyme is formed, which can initiate transcription.

It catalyses the reaction RNA(n) + a ribonucleoside 5'-triphosphate = RNA(n+1) + diphosphate. In terms of biological role, DNA-dependent RNA polymerase catalyzes the transcription of DNA into RNA using the four ribonucleoside triphosphates as substrates. The sequence is that of DNA-directed RNA polymerase subunit beta from Acidovorax ebreus (strain TPSY) (Diaphorobacter sp. (strain TPSY)).